A 137-amino-acid polypeptide reads, in one-letter code: ATP synthase epsilon chain (137 aa).

The protein belongs to the ATPase epsilon chain family. In terms of assembly, F-type ATPases have 2 components, CF(1) - the catalytic core - and CF(0) - the membrane proton channel. CF(1) has five subunits: alpha(3), beta(3), gamma(1), delta(1), epsilon(1). CF(0) has three main subunits: a, b and c.

It is found in the cellular thylakoid membrane. Functionally, produces ATP from ADP in the presence of a proton gradient across the membrane. This is ATP synthase epsilon chain from Nostoc punctiforme (strain ATCC 29133 / PCC 73102).